The sequence spans 105 residues: Nucleoid-associated protein ABC0038 (105 aa).

The span at 1-22 (MEMKNMGNMMKQMQKMQKQMMK) shows a compositional bias: low complexity. The disordered stretch occupies residues 1–26 (MEMKNMGNMMKQMQKMQKQMMKAQEE).

The protein belongs to the YbaB/EbfC family. As to quaternary structure, homodimer.

Its subcellular location is the cytoplasm. The protein localises to the nucleoid. In terms of biological role, binds to DNA and alters its conformation. May be involved in regulation of gene expression, nucleoid organization and DNA protection. The chain is Nucleoid-associated protein ABC0038 from Shouchella clausii (strain KSM-K16) (Alkalihalobacillus clausii).